The following is a 72-amino-acid chain: Putative membrane protein insertion efficiency factor (72 aa).

The protein belongs to the UPF0161 family.

The protein resides in the cell inner membrane. Could be involved in insertion of integral membrane proteins into the membrane. This Trichodesmium erythraeum (strain IMS101) protein is Putative membrane protein insertion efficiency factor.